Here is a 304-residue protein sequence, read N- to C-terminus: Ribonuclease Z (304 aa).

Residues histidine 61, histidine 63, aspartate 65, histidine 66, histidine 138, aspartate 206, and histidine 265 each contribute to the Zn(2+) site. Aspartate 65 serves as the catalytic Proton acceptor.

Belongs to the RNase Z family. As to quaternary structure, homodimer. Requires Zn(2+) as cofactor.

It carries out the reaction Endonucleolytic cleavage of RNA, removing extra 3' nucleotides from tRNA precursor, generating 3' termini of tRNAs. A 3'-hydroxy group is left at the tRNA terminus and a 5'-phosphoryl group is left at the trailer molecule.. Functionally, zinc phosphodiesterase, which displays some tRNA 3'-processing endonuclease activity. Probably involved in tRNA maturation, by removing a 3'-trailer from precursor tRNA. The chain is Ribonuclease Z from Lachnoclostridium phytofermentans (strain ATCC 700394 / DSM 18823 / ISDg) (Clostridium phytofermentans).